A 307-amino-acid chain; its full sequence is tRNA dimethylallyltransferase (307 aa).

6–13 is an ATP binding site; sequence GATATGKT. Substrate is bound at residue 8–13; that stretch reads TATGKT. The segment at 31 to 34 is interaction with substrate tRNA; the sequence is DSMM.

The protein belongs to the IPP transferase family. In terms of assembly, monomer. Requires Mg(2+) as cofactor.

The enzyme catalyses adenosine(37) in tRNA + dimethylallyl diphosphate = N(6)-dimethylallyladenosine(37) in tRNA + diphosphate. Catalyzes the transfer of a dimethylallyl group onto the adenine at position 37 in tRNAs that read codons beginning with uridine, leading to the formation of N6-(dimethylallyl)adenosine (i(6)A). This chain is tRNA dimethylallyltransferase, found in Sulfurihydrogenibium sp. (strain YO3AOP1).